The following is a 594-amino-acid chain: A-type ATP synthase subunit A (594 aa).

Residue 236–243 (GPFGSGKT) coordinates ATP.

Belongs to the ATPase alpha/beta chains family. In terms of assembly, has multiple subunits with at least A(3), B(3), C, D, E, F, H, I and proteolipid K(x).

It localises to the cell membrane. The catalysed reaction is ATP + H2O + 4 H(+)(in) = ADP + phosphate + 5 H(+)(out). Functionally, component of the A-type ATP synthase that produces ATP from ADP in the presence of a proton gradient across the membrane. The A chain is the catalytic subunit. In Pyrobaculum calidifontis (strain DSM 21063 / JCM 11548 / VA1), this protein is A-type ATP synthase subunit A.